Reading from the N-terminus, the 151-residue chain is D-ribose pyranase 1 (151 aa).

Catalysis depends on His20, which acts as the Proton donor. Residues Asp28, His98, and 121 to 123 (WGN) each bind substrate.

It belongs to the RbsD / FucU family. RbsD subfamily. In terms of assembly, homodecamer.

It is found in the cytoplasm. It carries out the reaction beta-D-ribopyranose = beta-D-ribofuranose. Its pathway is carbohydrate metabolism; D-ribose degradation; D-ribose 5-phosphate from beta-D-ribopyranose: step 1/2. In terms of biological role, catalyzes the interconversion of beta-pyran and beta-furan forms of D-ribose. This chain is D-ribose pyranase 1, found in Streptomyces griseus subsp. griseus (strain JCM 4626 / CBS 651.72 / NBRC 13350 / KCC S-0626 / ISP 5235).